The chain runs to 148 residues: Deoxyuridine 5'-triphosphate nucleotidohydrolase (148 aa).

Residues 67 to 69 (RSG), asparagine 80, 84 to 86 (LID), and methionine 94 contribute to the substrate site.

This sequence belongs to the dUTPase family. It depends on Mg(2+) as a cofactor.

The catalysed reaction is dUTP + H2O = dUMP + diphosphate + H(+). It participates in pyrimidine metabolism; dUMP biosynthesis; dUMP from dCTP (dUTP route): step 2/2. In terms of biological role, this enzyme is involved in nucleotide metabolism: it produces dUMP, the immediate precursor of thymidine nucleotides and it decreases the intracellular concentration of dUTP so that uracil cannot be incorporated into DNA. The sequence is that of Deoxyuridine 5'-triphosphate nucleotidohydrolase from Burkholderia thailandensis (strain ATCC 700388 / DSM 13276 / CCUG 48851 / CIP 106301 / E264).